We begin with the raw amino-acid sequence, 652 residues long: DNA ligase (652 aa).

NAD(+)-binding positions include 29 to 33 (DAEYD), 78 to 79 (SL), and Glu107. The active-site N6-AMP-lysine intermediate is the Lys109. NAD(+) is bound by residues Arg130, Glu164, Lys278, and Lys302. Zn(2+) contacts are provided by Cys395, Cys398, Cys413, and Cys418. One can recognise a BRCT domain in the interval 577–652 (TDDAILSGKT…VKDEAWLLDL (76 aa)).

Belongs to the NAD-dependent DNA ligase family. LigA subfamily. Mg(2+) is required as a cofactor. Requires Mn(2+) as cofactor.

It catalyses the reaction NAD(+) + (deoxyribonucleotide)n-3'-hydroxyl + 5'-phospho-(deoxyribonucleotide)m = (deoxyribonucleotide)n+m + AMP + beta-nicotinamide D-nucleotide.. Functionally, DNA ligase that catalyzes the formation of phosphodiester linkages between 5'-phosphoryl and 3'-hydroxyl groups in double-stranded DNA using NAD as a coenzyme and as the energy source for the reaction. It is essential for DNA replication and repair of damaged DNA. The protein is DNA ligase of Streptococcus thermophilus (strain ATCC BAA-491 / LMD-9).